The chain runs to 67 residues: Small ribosomal subunit protein eS31 (67 aa).

The Zn(2+) site is built by Cys35, Cys38, Cys54, and Cys57. Residues 35–57 form a C4-type zinc finger; that stretch reads CPRCGSIMAHHMKPLERWACGKC.

It belongs to the eukaryotic ribosomal protein eS31 family. Part of the 30S ribosomal subunit. Zn(2+) serves as cofactor.

This is Small ribosomal subunit protein eS31 from Sulfolobus acidocaldarius (strain ATCC 33909 / DSM 639 / JCM 8929 / NBRC 15157 / NCIMB 11770).